A 412-amino-acid polypeptide reads, in one-letter code: Chorismate synthase (412 aa).

Positions 40 and 46 each coordinate NADP(+). FMN-binding positions include 134-136, 255-256, glycine 299, 314-318, and arginine 340; these read RAS, QA, and KPIAT.

Belongs to the chorismate synthase family. As to quaternary structure, homotetramer. FMNH2 serves as cofactor.

The enzyme catalyses 5-O-(1-carboxyvinyl)-3-phosphoshikimate = chorismate + phosphate. Its pathway is metabolic intermediate biosynthesis; chorismate biosynthesis; chorismate from D-erythrose 4-phosphate and phosphoenolpyruvate: step 7/7. Functionally, catalyzes the anti-1,4-elimination of the C-3 phosphate and the C-6 proR hydrogen from 5-enolpyruvylshikimate-3-phosphate (EPSP) to yield chorismate, which is the branch point compound that serves as the starting substrate for the three terminal pathways of aromatic amino acid biosynthesis. This reaction introduces a second double bond into the aromatic ring system. The protein is Chorismate synthase of Clavibacter michiganensis subsp. michiganensis (strain NCPPB 382).